Here is a 504-residue protein sequence, read N- to C-terminus: Cytochrome P450 monooxygenase iccC (504 aa).

Residues 7-26 (LPWILLYTGFLAIFLSRLFS) traverse the membrane as a helical segment. N-linked (GlcNAc...) asparagine glycosylation is found at Asn134, Asn312, Asn365, and Asn374. Cys452 serves as a coordination point for heme. Asn494 carries an N-linked (GlcNAc...) asparagine glycan.

It belongs to the cytochrome P450 family. Heme is required as a cofactor.

It is found in the membrane. It carries out the reaction (3E,5S)-3-[(2E,4E,8S,10E,12Z)-1-hydroxy-4,8-dimethyltetradeca-2,4,10,12-tetraen-1-ylidene]-5-[(4-hydroxyphenyl)methyl]pyrrolidine-2,4-dione + reduced [NADPH--hemoprotein reductase] + O2 = 3-[(2E,4E,8S,10E,12Z)-4,8-dimethyltetradeca-2,4,10,12-tetraenoyl]-4-hydroxy-5-(4-hydroxyphenyl)-1,2-dihydropyridin-2-one + oxidized [NADPH--hemoprotein reductase] + 2 H2O. The protein operates within mycotoxin biosynthesis. In terms of biological role, cytochrome P450 monooxygenase; part of the gene cluster that mediates the biosynthesis of ilicicolin H, a 4-hydroxy-2-pyridonealkaloid that has potent and broad antifungal activities by inhibiting the mitochondrial respiration chain. IccC catalyzes the ring expansion of the tetramate intermediate to the acyclic 2-pyridone intermediate that contains the trans bis-diene chain. The biosynthesis of ilicicolin H starts with formation of the tetramic acid by the hybrid PKS-NRPS synthetase iccA with the partnering trans-enoyl reductase iccB since iccA lacks a designated enoylreductase (ER) domain. The cytochrome P450 monooxygenase iccC then catalyzes the ring expansion of the tetramate to the acyclic 2-pyridone. The pericyclase iccD further converts the acyclic 2-pyridone into 8-epi-ilicicolin H. Finally, the epimerase iccE converts 8-epi-ilicicolin H into ilicicolin H via epimerization. IccA to iccE are sufficient for ilicicolin H biosynthesis and the roles of the remaining enzymes, iccF, iccG and iccH within the pathway have still to be determined. The protein is Cytochrome P450 monooxygenase iccC of Talaromyces variabilis (Penicillium variabile).